Consider the following 353-residue polypeptide: MKKKWYIVLTMSGYEEKVKENIEKKVEATGIKNLVGRIVIPEEVVLDATSPSERLILSPKAKLHVNNGKDVNKGDLIAEEPPIYARRSGVIVDVKNVRKIVVETIDRKYTKTYYIPESAGIEPGLRVGTKVKQGLPLSKNEEYICELDGKIVEIERMKKVVVQTPDGEQDVYYIPLDVFDRDRIKKGKEVKQGEMLAEARKFFAKVSGRVEVVDYSTRKEIRIYKTKRRKLFPGYVFVEMIMNDEAYNFVRSVPYVMGFVSSGGQPVPVKDREMRPILRLAGLEEYEEKKKPVKVELGFKVGDMVKIISGPFEDFAGVIKEIDPERQELKVNVTIFGRETPVVLHVSEVEKIE.

The KOW domain maps to 301-335 (VGDMVKIISGPFEDFAGVIKEIDPERQELKVNVTI).

The protein belongs to the NusG family.

With respect to regulation, regulated by autoinhibition via interaction of the N-terminal and the C-terminal domains. Autoinhibition may prevent NusG from interacting prematurely with other components of the transcription complex or non-specific interactions with other cellular components. Participates in transcription elongation, termination and antitermination. The polypeptide is Transcription termination/antitermination protein NusG (Thermotoga maritima (strain ATCC 43589 / DSM 3109 / JCM 10099 / NBRC 100826 / MSB8)).